A 244-amino-acid polypeptide reads, in one-letter code: tRNA pseudouridine synthase A (244 aa).

D52 serves as the catalytic Nucleophile. Substrate is bound at residue Y110.

The protein belongs to the tRNA pseudouridine synthase TruA family. As to quaternary structure, homodimer.

The catalysed reaction is uridine(38/39/40) in tRNA = pseudouridine(38/39/40) in tRNA. Its function is as follows. Formation of pseudouridine at positions 38, 39 and 40 in the anticodon stem and loop of transfer RNAs. The sequence is that of tRNA pseudouridine synthase A from Geotalea uraniireducens (strain Rf4) (Geobacter uraniireducens).